A 581-amino-acid chain; its full sequence is Protein alan shepard (581 aa).

A compositionally biased stretch (pro residues) spans 1–10; that stretch reads MHPRYSPAPP. The disordered stretch occupies residues 1 to 73; the sequence is MHPRYSPAPP…AVTAAPPTPR (73 aa). Y5 carries the phosphotyrosine modification. Over residues 35–54 the composition is skewed to polar residues; that stretch reads ANNSQQLPPQMPRSQNYANG. Low complexity predominate over residues 55-68; it reads SSSSAAAASAVTAA. Residues Y128 and Y146 each carry the phosphotyrosine modification. Over residues 168–226 the composition is skewed to low complexity; it reads PATTTYGQRVPTAASPSNTNSSSSSNTGSQSGTLSTSLSHTTNTNTNMGPNGTAQNQNQ. The tract at residues 168-234 is disordered; the sequence is PATTTYGQRV…NQQGGGGEQL (67 aa). 2 RRM domains span residues 237–310 and 316–395; these read TNLY…MAKQ and TNLY…FADG. A disordered region spans residues 555–581; that stretch reads MTDSEQASTAASPDEAYTQYPHQAAPK.

Functionally, has a role in the perception of gravity. The chain is Protein alan shepard from Drosophila willistoni (Fruit fly).